A 373-amino-acid chain; its full sequence is Cyclin-A3-1 (373 aa).

The tract at residues 50–80 is disordered; that stretch reads AVVLKPQPAPRGGKRAASHAAEPKKPAPPPA.

This sequence belongs to the cyclin family. Cyclin AB subfamily.

The chain is Cyclin-A3-1 (CYCA3-1) from Oryza sativa subsp. japonica (Rice).